A 45-amino-acid chain; its full sequence is Cytochrome b559 subunit beta (45 aa).

A helical transmembrane segment spans residues W20–A36. Position 24 (H24) interacts with heme.

It belongs to the PsbE/PsbF family. As to quaternary structure, heterodimer of an alpha subunit and a beta subunit. PSII is composed of 1 copy each of membrane proteins PsbA, PsbB, PsbC, PsbD, PsbE, PsbF, PsbH, PsbI, PsbJ, PsbK, PsbL, PsbM, PsbT, PsbX, PsbY, PsbZ, Psb30/Ycf12, peripheral proteins PsbO, CyanoQ (PsbQ), PsbU, PsbV and a large number of cofactors. It forms dimeric complexes. The cofactor is heme b.

It is found in the cellular thylakoid membrane. Functionally, this b-type cytochrome is tightly associated with the reaction center of photosystem II (PSII). PSII is a light-driven water:plastoquinone oxidoreductase that uses light energy to abstract electrons from H(2)O, generating O(2) and a proton gradient subsequently used for ATP formation. It consists of a core antenna complex that captures photons, and an electron transfer chain that converts photonic excitation into a charge separation. In Synechococcus sp. (strain CC9902), this protein is Cytochrome b559 subunit beta.